The primary structure comprises 293 residues: Homoserine kinase (293 aa).

83–93 is a binding site for ATP; the sequence is PITRGMGSSSA.

Belongs to the GHMP kinase family. Homoserine kinase subfamily.

The protein resides in the cytoplasm. The enzyme catalyses L-homoserine + ATP = O-phospho-L-homoserine + ADP + H(+). It functions in the pathway amino-acid biosynthesis; L-threonine biosynthesis; L-threonine from L-aspartate: step 4/5. Functionally, catalyzes the ATP-dependent phosphorylation of L-homoserine to L-homoserine phosphate. The sequence is that of Homoserine kinase from Helicobacter pylori (strain ATCC 700392 / 26695) (Campylobacter pylori).